A 341-amino-acid polypeptide reads, in one-letter code: Putative ubiquitin-like-specific protease 1B (341 aa).

Active-site residues include His231, Asp248, and Cys300.

This sequence belongs to the peptidase C48 family.

Protease that catalyzes two essential functions in the SUMO pathway: processing of full-length SUMOs to their mature forms and deconjugation of SUMO from targeted proteins. This is Putative ubiquitin-like-specific protease 1B (ULP1B) from Arabidopsis thaliana (Mouse-ear cress).